Reading from the N-terminus, the 956-residue chain is UvrABC system protein A (956 aa).

33-40 contributes to the ATP binding site; sequence GLSGSGKS. The segment at 252-279 adopts a C4-type zinc-finger fold; it reads CPYCGFSVGELEPRMFSFNSPFGACPTC. ABC transporter domains are found at residues 309–587 and 607–936; these read WRPI…KNSI and GNGL…KYLK. 639–646 provides a ligand contact to ATP; the sequence is GVSGSGKS. The C4-type zinc finger occupies 738-764; that stretch reads CEACKGDGIIKIEMHFLPDVYVPCEVC.

This sequence belongs to the ABC transporter superfamily. UvrA family. In terms of assembly, forms a heterotetramer with UvrB during the search for lesions.

Its subcellular location is the cytoplasm. Functionally, the UvrABC repair system catalyzes the recognition and processing of DNA lesions. UvrA is an ATPase and a DNA-binding protein. A damage recognition complex composed of 2 UvrA and 2 UvrB subunits scans DNA for abnormalities. When the presence of a lesion has been verified by UvrB, the UvrA molecules dissociate. The protein is UvrABC system protein A of Listeria monocytogenes serovar 1/2a (strain ATCC BAA-679 / EGD-e).